The following is a 639-amino-acid chain: Chaperone protein DnaK (639 aa).

Thr-198 bears the Phosphothreonine; by autocatalysis mark. The tract at residues 605–624 (SQAQGGAETNAGKQANAAAD) is disordered.

It belongs to the heat shock protein 70 family.

Functionally, acts as a chaperone. The protein is Chaperone protein DnaK of Shewanella putrefaciens (strain CN-32 / ATCC BAA-453).